The primary structure comprises 745 residues: Dipeptidyl aminopeptidase 4 (745 aa).

The first 22 residues, 1-22 (MRLALFALFALMTVATALPAHA), serve as a signal peptide directing secretion. Substrate is bound by residues Glu-208 and Glu-209. Residues Ser-613, Asp-689, and His-721 each act as charge relay system in the active site.

The protein belongs to the peptidase S9B family. As to quaternary structure, homodimer.

Its subcellular location is the cytoplasm. The protein resides in the periplasm. The enzyme catalyses Release of an N-terminal dipeptide, Xaa-Yaa-|-Zaa-, from a polypeptide, preferentially when Yaa is Pro, provided Zaa is neither Pro nor hydroxyproline.. Completely inhibited by the serine protease inhibitor diisopropyl fluorophosphate (DFP) and moderately by N-tosyl-L-phenyl-alanyl chloromethyl ketone (TPCK). Somewhat inhibited by phenylmethanesulfonyl fluoride (PMSF). Activity is not affected by thiol- or metalloprotease inhibitors, such as iodoacetate (IAA), EDTA, N-tosyl-L-lysyl chloromethyl ketone (TLCK), o-phenanthlorine, N-ethylmaleimide (NEM) or dithiothreitol (DTT). Its function is as follows. Catalyzes the sequential release of Tyr-Pro, Phe-Pro and Gly-Pro from the N-terminus of peptides and proteins. Is able to cleaves bioactive peptide beta-casomorphin. The protein is Dipeptidyl aminopeptidase 4 of Pseudoxanthomonas mexicana.